Here is a 25-residue protein sequence, read N- to C-terminus: Aurein-5.2 (25 aa).

Expressed by the skin dorsal glands.

The protein resides in the secreted. Its function is as follows. Has antimicrobial activity against L.lactis and S.uberis. This Ranoidea raniformis (Southern bell frog) protein is Aurein-5.2.